Consider the following 746-residue polypeptide: PAN2-PAN3 deadenylation complex subunit pan3 (746 aa).

A C3H1-type zinc finger spans residues 7–35; sequence PKNQKQCKNIALHGYCRNSDKCEFSHELT. Over residues 64 to 97 the composition is skewed to low complexity; it reads QQQQQQQNSNGNGSNNTATSNNPIISPNSNIASP. Disordered stretches follow at residues 64-100, 169-205, and 219-275; these read QQQQ…PLKK, DDQH…NMNN, and NASP…PSLQ. The segment covering 196–205 has biased composition (polar residues); that stretch reads NNGIDPNMNN. Low complexity predominate over residues 221 to 275; the sequence is SPQSYQQQFQQPNPSPQSSSQQQQQQQQQQQQAVYQQQQQQQPSSQPLAQNPSLQ. A pseudokinase domain region spans residues 351-610; that stretch reads DPNDPRIKNI…NIDEVVLMIS (260 aa). Residues arginine 407, 457-464, and 509-510 each bind ATP; these read EFFPGSET and SK. Residues 611-649 adopt a coiled-coil conformation; the sequence is GRLLQENNYLHTYTDDLETELSKEYENGRLFRLVTKLGF. Residues 650-746 form a knob domain region; it reads INERPLYDMD…SELVSQKSHI (97 aa).

This sequence belongs to the protein kinase superfamily. PAN3 family. In terms of assembly, homodimer. Forms a heterotrimer with a catalytic subunit PAN2 to form the poly(A)-nuclease (PAN) deadenylation complex. Interacts (via PAM-2 motif) with poly(A)-binding protein (via PABC domain), conferring substrate specificity of the enzyme complex.

The protein localises to the cytoplasm. In terms of biological role, regulatory subunit of the poly(A)-nuclease (PAN) deadenylation complex, one of two cytoplasmic mRNA deadenylases involved in mRNA turnover. PAN specifically shortens poly(A) tails of RNA and the activity is stimulated by poly(A)-binding protein (PABP). PAN deadenylation is followed by rapid degradation of the shortened mRNA tails by the CCR4-NOT complex. Deadenylated mRNAs are then degraded by two alternative mechanisms, namely exosome-mediated 3'-5' exonucleolytic degradation, or deadenylation-dependent mRNA decaping and subsequent 5'-3' exonucleolytic degradation by XRN1. PAN3 acts as a positive regulator for PAN activity, recruiting the catalytic subunit PAN2 to mRNA via its interaction with RNA and PABP. The chain is PAN2-PAN3 deadenylation complex subunit pan3 from Dictyostelium discoideum (Social amoeba).